Consider the following 200-residue polypeptide: Imidazoleglycerol-phosphate dehydratase (200 aa).

It belongs to the imidazoleglycerol-phosphate dehydratase family.

It localises to the cytoplasm. The enzyme catalyses D-erythro-1-(imidazol-4-yl)glycerol 3-phosphate = 3-(imidazol-4-yl)-2-oxopropyl phosphate + H2O. Its pathway is amino-acid biosynthesis; L-histidine biosynthesis; L-histidine from 5-phospho-alpha-D-ribose 1-diphosphate: step 6/9. This is Imidazoleglycerol-phosphate dehydratase from Prosthecochloris aestuarii (strain DSM 271 / SK 413).